Reading from the N-terminus, the 222-residue chain is Collectrin (222 aa).

An N-terminal signal peptide occupies residues 1–14; that stretch reads MLWALFFLVTTIHA. At 15 to 141 the chain is on the extracellular side; that stretch reads ELCRPDAENA…LAPPMDPSVP (127 aa). The region spanning 21-222 is the Collectrin-like domain; sequence AENAFKVRLS…LTEDERLTPL (202 aa). N-linked (GlcNAc...) asparagine glycans are attached at residues Asn76 and Asn93. Residues 142-162 traverse the membrane as a helical segment; it reads VWIIVFGVIFCIVTVAIALLV. Over 163–222 the chain is Cytoplasmic; the sequence is LSGIRQRRRNKKGPPGVEDAEDKCENIITIENGIPCDPLDMKGGHINDGFLTEDERLTPL. Phosphothreonine is present on residues Thr214 and Thr220.

The protein belongs to the CLTRN family. As to quaternary structure, monomer. Homodimer; dimerization prevents CLTRN cleavage by BACE2. Interacts with SLC6A18; this interaction regulates the trafficking of SLC6A18 to the cell membrane and its amino acid transporter activity. Interacts with SLC6A19; this interaction regulates the trafficking of SLC6A19 to the cell membrane and its amino acid transporter activity. Interacts with SNAPIN. In terms of processing, glycosylated. Glycosylation is required for plasma membrane localization and for its cleavage by BACE2. Proteolytically processed in pancreatic beta cells by BACE2 leading to the generation and extracellular release of soluble CLTRN, and a corresponding cell-associated C-terminal fragment which is later cleaved by gamma-secretase. This shedding process inactivates CLTRN. Three cleavage sites have been identified for BACE2, two clustered sites after Phe-116 and Leu-118 and a more membrane proximal site at Phe-125; the preferred BACE2 cleavage site seems to be between Phe-125 and Leu-126, Phe-116 and Leu-118 act as alternative sites. As to expression, kidney; collecting ducts. Pancreas; beta cells of islets.

The protein localises to the cell membrane. Plays an important role in amino acid transport by acting as binding partner of amino acid transporters SLC6A18 and SLC6A19, regulating their trafficking on the cell surface and their activity. May also play a role in trafficking of amino acid transporters SLC3A1 and SLC7A9 to the renal cortical cell membrane. Regulator of SNARE complex function. Stimulator of beta cell replication. The sequence is that of Collectrin from Rattus norvegicus (Rat).